The chain runs to 619 residues: Coagulation factor X-activating enzyme heavy chain (619 aa).

Positions 1–20 (MMQVLLVTISLAVFPYQGSS) are cleaved as a signal peptide. Positions 21–188 (IILESGNVND…SDKPIKKASQ (168 aa)) are excised as a propeptide. The 195-residue stretch at 199–393 (IFIELVIIVD…YKPKCIFNPP (195 aa)) folds into the Peptidase M12B domain. A disulfide bridge connects residues C215 and C251. 2 N-linked (GlcNAc...) (complex) asparagine glycosylation sites follow: N216 and N257. 3 disulfides stabilise this stretch: C308-C388, C348-C372, and C350-C355. Residue H333 participates in Zn(2+) binding. E334 is a catalytic residue. Residues H337 and H343 each contribute to the Zn(2+) site. Residues N351 and N371 are each glycosylated (N-linked (GlcNAc...) (complex) asparagine). In terms of domain architecture, Disintegrin spans 401–487 (PPVCGNEIWE…ECPRDQLQQN (87 aa)). Positions 403, 406, 408, 410, 413, and 416 each coordinate Ca(2+). Disulfide bonds link C404–C433, C415–C428, C417–C423, C427–C450, C441–C447, C446–C472, C459–C479, C466–C498, C491–C503, C510–C560, C525–C571, C538–C548, C555–C597, and C591–C603. The short motif at 465 to 467 (ECD) is the D/ECD-tripeptide element. Residues D467, V468, E470, D482, and Q483 each contribute to the Ca(2+) site.

It belongs to the venom metalloproteinase (M12B) family. P-III subfamily. P-IIId sub-subfamily. In terms of assembly, heterotrimer; disulfide-linked. The heterotrimer consists of 1 heavy chain and 2 light chains (lectins): LC1 and LC2. Requires Zn(2+) as cofactor. Post-translationally, N-glycosylated; probably required for conformation. Removal of easily accessible sugars does not change its functional capacity, but removal of the core sugars with N-glycanase causes a virtually complete loss of enzyme activity, apparently as a result of major conformational changes in the molecule. Not O-glycosylated. In terms of tissue distribution, expressed by the venom gland.

It localises to the secreted. It catalyses the reaction Specifically activates several components of the blood clotting system, including coagulation factor X, coagulation factor IX and protein C by cleavage of Arg-|-Xaa bonds. Has no action on insulin B chain.. Its function is as follows. Catalytic subunit of blood coagulation factor X-activating enzyme. Activates coagulation factor X (F10) by cleaving the Arg-Ile bond and is also able to activate coagulation factor IX (F9) and protein S (PROS1) by specific cleavage of Arg-Ile and Arg-Val bonds. This is Coagulation factor X-activating enzyme heavy chain from Daboia siamensis (Eastern Russel's viper).